The chain runs to 867 residues: Putative ubiquitin thioesterase L96 (867 aa).

4 disordered regions span residues 49 to 73 (VNQYSTNPPSSSSESDDDEDMGKQD), 177 to 204 (IKSVSPSRSPSPRRSRSPSPNIQNMKKK), 231 to 271 (YILS…PKYR), and 379 to 591 (LSTQ…YKGG). 2 stretches are compositionally biased toward basic residues: residues 234–258 (SRKKSPSPVRKSRSPSLRQRSRSPG) and 421–430 (KITRKPKSPR). Composition is skewed to low complexity over residues 433-462 (PPASVRRSRTPSVPKSPSARPRSKSPSVRA) and 472-551 (PPSS…KSPS). The segment covering 565-575 (ITVDPSVTPPS) has biased composition (polar residues). A compositionally biased stretch (basic and acidic residues) spans 582-591 (RPELPEYKGG). One can recognise an OTU domain in the interval 606–745 (YKVIPVKGDG…DYHYTALTPL (140 aa)). The active site involves Asp614. The active-site Nucleophile is Cys617. The active site involves His738.

The catalysed reaction is Thiol-dependent hydrolysis of ester, thioester, amide, peptide and isopeptide bonds formed by the C-terminal Gly of ubiquitin (a 76-residue protein attached to proteins as an intracellular targeting signal).. In terms of biological role, hydrolase that can remove conjugated ubiquitin from proteins and may therefore play an important regulatory role at the level of protein turnover by preventing degradation. May be involved in TIV genomic DNA packaging in a manner related to the Gag polyproteins of the mammalian viruses. This chain is Putative ubiquitin thioesterase L96, found in Tipula iridescent virus (TIV).